The primary structure comprises 115 residues: MLGLLGSTALVGWITGAAVAVLLLLLLLATCLFHGRQDCDVERNRTAAGGNRVRRAQPWPFRRRGHLGIFHHHRHPGHVSHVPNVGLHHHHHPRHTPHHLHHHHHPHRHHPRHAR.

The helical transmembrane segment at 9-29 threads the bilayer; it reads ALVGWITGAAVAVLLLLLLLA. The interval 86–115 is disordered; that stretch reads GLHHHHHPRHTPHHLHHHHHPHRHHPRHAR. Basic residues predominate over residues 87 to 115; sequence LHHHHHPRHTPHHLHHHHHPHRHHPRHAR.

The protein resides in the membrane. This is Histidine-rich carboxyl terminus protein 1 (HRCT1) from Homo sapiens (Human).